Here is a 141-residue protein sequence, read N- to C-terminus: VLSPADKTNVKTAWGKVGAHAGDYGADALERMFLSFPTTKTYFPHFDLSHGSAQVKGHGKKVADALSNAVAHVDDMPNALSALSDLHAHKLRVDPVNFKLLSHCLLVTLAAHHPADFTPAVHASLDKFLASVSTVLTSKYR.

The 141-residue stretch at 1 to 141 (VLSPADKTNV…VSTVLTSKYR (141 aa)) folds into the Globin domain. Residue Ser-3 is modified to Phosphoserine. Lys-7 carries the post-translational modification N6-succinyllysine. Thr-8 bears the Phosphothreonine mark. Position 11 is an N6-succinyllysine (Lys-11). An N6-acetyllysine; alternate modification is found at Lys-16. Lys-16 is subject to N6-succinyllysine; alternate. Tyr-24 is modified (phosphotyrosine). At Ser-35 the chain carries Phosphoserine. Position 40 is an N6-succinyllysine (Lys-40). Phosphoserine is present on Ser-49. His-58 provides a ligand contact to O2. A heme b-binding site is contributed by His-87. Residue Ser-102 is modified to Phosphoserine. A Phosphothreonine modification is found at Thr-108. Ser-124 and Ser-131 each carry phosphoserine. A phosphothreonine mark is found at Thr-134 and Thr-137. Ser-138 carries the phosphoserine modification.

Belongs to the globin family. Heterotetramer of two alpha chains and two beta chains. In terms of tissue distribution, red blood cells.

Its function is as follows. Involved in oxygen transport from the lung to the various peripheral tissues. Functionally, hemopressin acts as an antagonist peptide of the cannabinoid receptor CNR1. Hemopressin-binding efficiently blocks cannabinoid receptor CNR1 and subsequent signaling. In Cebus capucinus (White-faced sapajou), this protein is Hemoglobin subunit alpha (HBA).